Here is a 265-residue protein sequence, read N- to C-terminus: GTP cyclohydrolase FolE2 (265 aa).

The protein belongs to the GTP cyclohydrolase IV family.

The catalysed reaction is GTP + H2O = 7,8-dihydroneopterin 3'-triphosphate + formate + H(+). It participates in cofactor biosynthesis; 7,8-dihydroneopterin triphosphate biosynthesis; 7,8-dihydroneopterin triphosphate from GTP: step 1/1. In terms of biological role, converts GTP to 7,8-dihydroneopterin triphosphate. This Bordetella bronchiseptica (strain ATCC BAA-588 / NCTC 13252 / RB50) (Alcaligenes bronchisepticus) protein is GTP cyclohydrolase FolE2.